Reading from the N-terminus, the 442-residue chain is 3-phosphoshikimate 1-carboxyvinyltransferase (442 aa).

3 residues coordinate 3-phosphoshikimate: lysine 25, serine 26, and arginine 30. Lysine 25 contributes to the phosphoenolpyruvate binding site. The phosphoenolpyruvate site is built by glycine 96 and arginine 124. Serine 171, serine 172, glutamine 173, serine 203, aspartate 325, and lysine 352 together coordinate 3-phosphoshikimate. Glutamine 173 lines the phosphoenolpyruvate pocket. The Proton acceptor role is filled by aspartate 325. Residues arginine 356, arginine 400, and lysine 425 each coordinate phosphoenolpyruvate.

It belongs to the EPSP synthase family. In terms of assembly, monomer.

The protein resides in the cytoplasm. It catalyses the reaction 3-phosphoshikimate + phosphoenolpyruvate = 5-O-(1-carboxyvinyl)-3-phosphoshikimate + phosphate. Its pathway is metabolic intermediate biosynthesis; chorismate biosynthesis; chorismate from D-erythrose 4-phosphate and phosphoenolpyruvate: step 6/7. In terms of biological role, catalyzes the transfer of the enolpyruvyl moiety of phosphoenolpyruvate (PEP) to the 5-hydroxyl of shikimate-3-phosphate (S3P) to produce enolpyruvyl shikimate-3-phosphate and inorganic phosphate. In Bordetella parapertussis (strain 12822 / ATCC BAA-587 / NCTC 13253), this protein is 3-phosphoshikimate 1-carboxyvinyltransferase.